We begin with the raw amino-acid sequence, 125 residues long: Mesotocin-neurophysin MT (125 aa).

The signal sequence occupies residues 1-19; it reads MSYTALAVTFFGWLALSSA. Cys-20 and Cys-25 are joined by a disulfide. Gly-28 bears the Glycine amide mark. Intrachain disulfides connect Cys-42/Cys-86, Cys-45/Cys-59, Cys-53/Cys-76, Cys-60/Cys-66, Cys-93/Cys-106, Cys-100/Cys-118, and Cys-107/Cys-112.

It belongs to the vasopressin/oxytocin family. In terms of tissue distribution, mesotocin is produced by magnocellular preoptic neurons in the hypothalamus in amphibians, reptiles and birds.

It localises to the secreted. Functionally, mesotocin is a diuretic hormone. The sequence is that of Mesotocin-neurophysin MT from Bufo japonicus (Japanese common toad).